The primary structure comprises 650 residues: MADTPPPLIELIDLERVFDSSEVPVRALDRVSLTIHEGEFVAIIGQSGSGKSTLMSILGCLDRPTGGLYRLGGIDVASLDPVALAGLRRDTFGFVFQRYNLLAGASAAENVEMPAVYAGQPRHQRLERAHALLDRLGMGARSGHFPNQLSGGQQQRVSIARALMNDPRVILADEPTGALDSASGRDVLALLEALHTEGRTVILITHDRDVAARAERVIALQDGRVVEDSGRPAPVGSDRPLGRPPGGAAYLGMAASFGEALKMAGRSLRANIFRTALTLLGVVIGVAAVVTMMAIGEGSKQDVLTRIQSMGTNLLLVRPGAPGIRPSGTDVSLTPTDAEAVAQLAGMAAVAPERMASGITVRREGIDYRTTINGTWPAYAAAKDWPMAWGSFFDATDLQASAPVAVLGQTVAKNLFPGEEDPVGSYFLVRNVPFLVIGVLEAKGATPFGQDQDDIVLIPLTTAFARVSGGRYLSSLTARVEDATTIDESQAAIESLLQARHGKVDFQVRNTQSLLEMVEKTQNSLTLLLGAVALISLLVGGIGVMNIMLVSVTERTREIGIRLATGARASDILLQFNTEAVAVCGVGGLAGVGLGLGAALAVAEFGLPVRFTPGPPIVAFCCAFLTGLLFGYLPARKAARLDPVVALSAE.

The 240-residue stretch at 9-248 (IELIDLERVF…RPLGRPPGGA (240 aa)) folds into the ABC transporter domain. 45 to 52 (GQSGSGKS) contacts ATP. Helical transmembrane passes span 276–296 (ALTL…MAIG), 525–545 (LTLL…IGVM), 580–600 (AVAV…GAAL), and 615–635 (PPIV…YLPA).

The protein belongs to the ABC transporter superfamily. Macrolide exporter (TC 3.A.1.122) family. As to quaternary structure, homodimer.

It is found in the cell inner membrane. In terms of biological role, non-canonical ABC transporter that contains transmembrane domains (TMD), which form a pore in the inner membrane, and an ATP-binding domain (NBD), which is responsible for energy generation. Confers resistance against macrolides. This Rhodospirillum rubrum (strain ATCC 11170 / ATH 1.1.1 / DSM 467 / LMG 4362 / NCIMB 8255 / S1) protein is Macrolide export ATP-binding/permease protein MacB.